We begin with the raw amino-acid sequence, 1296 residues long: DNA-directed RNA polymerase subunit beta' (1296 aa).

Cysteine 60, cysteine 62, cysteine 75, and cysteine 78 together coordinate Zn(2+). 3 residues coordinate Mg(2+): aspartate 535, aspartate 537, and aspartate 539. Cysteine 877, cysteine 954, cysteine 961, and cysteine 964 together coordinate Zn(2+).

This sequence belongs to the RNA polymerase beta' chain family. The RNAP catalytic core consists of 2 alpha, 1 beta, 1 beta' and 1 omega subunit. When a sigma factor is associated with the core the holoenzyme is formed, which can initiate transcription. Mg(2+) is required as a cofactor. It depends on Zn(2+) as a cofactor.

The enzyme catalyses RNA(n) + a ribonucleoside 5'-triphosphate = RNA(n+1) + diphosphate. DNA-dependent RNA polymerase catalyzes the transcription of DNA into RNA using the four ribonucleoside triphosphates as substrates. The protein is DNA-directed RNA polymerase subunit beta' of Beutenbergia cavernae (strain ATCC BAA-8 / DSM 12333 / CCUG 43141 / JCM 11478 / NBRC 16432 / NCIMB 13614 / HKI 0122).